We begin with the raw amino-acid sequence, 95 residues long: Acylphosphatase (95 aa).

The Acylphosphatase-like domain occupies C10–R95. Active-site residues include R25 and N43.

Belongs to the acylphosphatase family.

The catalysed reaction is an acyl phosphate + H2O = a carboxylate + phosphate + H(+). The polypeptide is Acylphosphatase (acyP) (Coxiella burnetii (strain RSA 493 / Nine Mile phase I)).